We begin with the raw amino-acid sequence, 201 residues long: Small ribosomal subunit protein uS4 (201 aa).

Residues 91–155 (SRLDNVVYRA…STLPFQVARE (65 aa)) form the S4 RNA-binding domain.

It belongs to the universal ribosomal protein uS4 family. Part of the 30S ribosomal subunit. Contacts protein S5. The interaction surface between S4 and S5 is involved in control of translational fidelity.

Its function is as follows. One of the primary rRNA binding proteins, it binds directly to 16S rRNA where it nucleates assembly of the body of the 30S subunit. In terms of biological role, with S5 and S12 plays an important role in translational accuracy. This Rhodococcus jostii (strain RHA1) protein is Small ribosomal subunit protein uS4.